The primary structure comprises 828 residues: Periplasmic nitrate reductase (828 aa).

Positions 1–31 (MKLSRRSFMKANAVAAAAAAAGLSVPGVARA) form a signal peptide, tat-type signal. In terms of domain architecture, 4Fe-4S Mo/W bis-MGD-type spans 39-95 (IKWDKAPCRFCGTGCGVLVGTQQGRVVACQGDPDAPVNRGLNCIKGYFLPKIMYGKD). Cys46, Cys49, Cys53, and Cys81 together coordinate [4Fe-4S] cluster. Residues Lys83, Gln150, Asn175, Cys179, 212 to 219 (WGANMAEM), 243 to 247 (STYQH), 262 to 264 (QSD), Met372, Gln376, Asn482, 508 to 509 (SD), Lys531, Asp558, and 718 to 727 (TGRVLEHWHT) contribute to the Mo-bis(molybdopterin guanine dinucleotide) site. Substrate is bound at residue Phe794. The Mo-bis(molybdopterin guanine dinucleotide) site is built by Asn802 and Lys819.

Belongs to the prokaryotic molybdopterin-containing oxidoreductase family. NasA/NapA/NarB subfamily. As to quaternary structure, component of the periplasmic nitrate reductase NapAB complex composed of NapA and NapB. The cofactor is [4Fe-4S] cluster. Mo-bis(molybdopterin guanine dinucleotide) is required as a cofactor. Post-translationally, predicted to be exported by the Tat system. The position of the signal peptide cleavage has not been experimentally proven.

The protein resides in the periplasm. The catalysed reaction is 2 Fe(II)-[cytochrome] + nitrate + 2 H(+) = 2 Fe(III)-[cytochrome] + nitrite + H2O. Functionally, catalytic subunit of the periplasmic nitrate reductase complex NapAB. Receives electrons from NapB and catalyzes the reduction of nitrate to nitrite. In Escherichia coli (strain K12 / MC4100 / BW2952), this protein is Periplasmic nitrate reductase.